A 156-amino-acid polypeptide reads, in one-letter code: Ribosomal RNA large subunit methyltransferase H (156 aa).

S-adenosyl-L-methionine contacts are provided by residues leucine 73, glycine 104, and 123–128; that span reads LSALTL.

It belongs to the RNA methyltransferase RlmH family. Homodimer.

It localises to the cytoplasm. It carries out the reaction pseudouridine(1915) in 23S rRNA + S-adenosyl-L-methionine = N(3)-methylpseudouridine(1915) in 23S rRNA + S-adenosyl-L-homocysteine + H(+). In terms of biological role, specifically methylates the pseudouridine at position 1915 (m3Psi1915) in 23S rRNA. The polypeptide is Ribosomal RNA large subunit methyltransferase H (Shewanella pealeana (strain ATCC 700345 / ANG-SQ1)).